Here is a 149-residue protein sequence, read N- to C-terminus: Endoribonuclease YbeY (149 aa).

Residues His112, His116, and His122 each contribute to the Zn(2+) site.

It belongs to the endoribonuclease YbeY family. Zn(2+) serves as cofactor.

It localises to the cytoplasm. Functionally, single strand-specific metallo-endoribonuclease involved in late-stage 70S ribosome quality control and in maturation of the 3' terminus of the 16S rRNA. The polypeptide is Endoribonuclease YbeY (Methylibium petroleiphilum (strain ATCC BAA-1232 / LMG 22953 / PM1)).